Here is a 173-residue protein sequence, read N- to C-terminus: Alpha-crystallin A chain (173 aa).

Position 1 is an N-acetylmethionine (Met-1). The segment at 1 to 63 (MDIAIQQPWF…RTVLDSGVSE (63 aa)) is required for complex formation with BFSP1 and BFSP2. A Deamidated glutamine; partial modification is found at Gln-6. Ser-45 is subject to Phosphoserine. Position 50 is a deamidated glutamine; partial (Gln-50). In terms of domain architecture, sHSP spans 52-162 (LFRTVLDSGV…GHSERAIPVS (111 aa)). Lys-70 and Lys-99 each carry N6-acetyllysine. Position 100 (His-100) interacts with Zn(2+). Deamidated asparagine; partial is present on Asn-101. 2 residues coordinate Zn(2+): Glu-102 and His-107. Phosphoserine is present on Ser-122. Asn-123 bears the Deamidated asparagine; partial mark. Positions 144–173 (PKVPSGVDAGHSERAIPVSREEKPSSAPSS) are disordered. Residues 153 to 167 (GHSERAIPVSREEKP) show a composition bias toward basic and acidic residues. His-154 is a Zn(2+) binding site. An O-linked (GlcNAc) serine glycan is attached at Ser-162.

It belongs to the small heat shock protein (HSP20) family. Heteromer composed of three CRYAA and one CRYAB subunits. Inter-subunit bridging via zinc ions enhances stability, which is crucial as there is no protein turn over in the lens. Can also form homodimers and homotetramers (dimers of dimers) which serve as the building blocks of homooligomers. Within homooligomers, the zinc-binding motif is created from residues of 3 different molecules. His-100 and Glu-102 from one molecule are ligands of the zinc ion, and His-107 and His-154 residues from additional molecules complete the site with tetrahedral coordination geometry. Part of a complex required for lens intermediate filament formation composed of BFSP1, BFSP2 and CRYAA. Acetylation at Lys-70 may increase chaperone activity. In terms of processing, undergoes age-dependent proteolytical cleavage at the C-terminus.

It localises to the cytoplasm. The protein localises to the nucleus. Functionally, contributes to the transparency and refractive index of the lens. Acts as a chaperone, preventing aggregation of various proteins under a wide range of stress conditions. Required for the correct formation of lens intermediate filaments as part of a complex composed of BFSP1, BFSP2 and CRYAA. The polypeptide is Alpha-crystallin A chain (CRYAA) (Neovison vison (American mink)).